Here is an 899-residue protein sequence, read N- to C-terminus: Lipoxygenase 2, chloroplastic (899 aa).

Residues 1 to 57 (MLKPQIHKPHLVNKLPLGTPFIPSHASIASFSTTSLRTLSVQKCYRRYIRYTSSNIK) constitute a chloroplast transit peptide. The PLAT domain occupies 83–203 (ALTAVTVGLL…DNPDKRIFFL (121 aa)). In terms of domain architecture, Lipoxygenase spans 206–899 (SYLPSETPEG…GKGVPYSISI (694 aa)). Residues 252–286 (DPDTDSDMARPVLGGNEHPFPRRCRTGRKMTSTEP) are disordered. Residues H557, H562, H749, N753, and I899 each contribute to the Fe cation site.

Belongs to the lipoxygenase family. Fe cation is required as a cofactor. In terms of tissue distribution, confined to glandular trichomes in flowers.

Its subcellular location is the plastid. The protein resides in the chloroplast. It participates in lipid metabolism; oxylipin biosynthesis. Plant lipoxygenases may be involved in a number of diverse aspects of plant physiology including growth and development, pest resistance, and senescence or responses to wounding. Catalyzes the hydroperoxidation of lipids containing a cis,cis-1,4-pentadiene structure. The chain is Lipoxygenase 2, chloroplastic from Tanacetum cinerariifolium (Dalmatian daisy).